The primary structure comprises 336 residues: tRNA N6-adenosine threonylcarbamoyltransferase (336 aa).

Residues H111 and H115 each contribute to the Fe cation site. Substrate contacts are provided by residues 134 to 138, D167, G180, D184, and N272; that span reads VVSGG. D300 is a Fe cation binding site.

The protein belongs to the KAE1 / TsaD family. It depends on Fe(2+) as a cofactor.

It localises to the cytoplasm. The enzyme catalyses L-threonylcarbamoyladenylate + adenosine(37) in tRNA = N(6)-L-threonylcarbamoyladenosine(37) in tRNA + AMP + H(+). In terms of biological role, required for the formation of a threonylcarbamoyl group on adenosine at position 37 (t(6)A37) in tRNAs that read codons beginning with adenine. Is involved in the transfer of the threonylcarbamoyl moiety of threonylcarbamoyl-AMP (TC-AMP) to the N6 group of A37, together with TsaE and TsaB. TsaD likely plays a direct catalytic role in this reaction. The protein is tRNA N6-adenosine threonylcarbamoyltransferase of Caldicellulosiruptor bescii (strain ATCC BAA-1888 / DSM 6725 / KCTC 15123 / Z-1320) (Anaerocellum thermophilum).